The sequence spans 261 residues: uncharacterized protein (261 aa).

Positions 135 to 261 (LVLKRIDEDI…VTEYTIYYSG (127 aa)) constitute an N-acetyltransferase domain.

This sequence belongs to the acetyltransferase family.

This is an uncharacterized protein from Bacillus subtilis (strain 168).